Reading from the N-terminus, the 362-residue chain is Chalcone synthase A (362 aa).

Cysteine 168 is an active-site residue.

This sequence belongs to the thiolase-like superfamily. Chalcone/stilbene synthases family.

The catalysed reaction is (E)-4-coumaroyl-CoA + 3 malonyl-CoA + 3 H(+) = 2',4,4',6'-tetrahydroxychalcone + 3 CO2 + 4 CoA. The protein operates within secondary metabolite biosynthesis; flavonoid biosynthesis. Its function is as follows. The primary product of this enzyme is 4,2',4',6'-tetrahydroxychalcone (also termed naringenin-chalcone or chalcone) which can under specific conditions spontaneously isomerize into naringenin. This is Chalcone synthase A (CHSA) from Ipomoea triloba (Trilobed morning glory).